The chain runs to 569 residues: AsmA family protein YicH (569 aa).

At 1 to 6 (MKFIGK) the chain is on the cytoplasmic side. Residues 7–27 (LLLYILIALLVAIAGLYFLLQ) form a helical membrane-spanning segment. Topologically, residues 28–569 (TRWGAEHISA…GEVTSTEPVR (542 aa)) are periplasmic.

The protein belongs to the AsmA family.

Its subcellular location is the cell inner membrane. The chain is AsmA family protein YicH (yicH) from Escherichia coli (strain K12).